Consider the following 290-residue polypeptide: ATP synthase gamma chain (290 aa).

It belongs to the ATPase gamma chain family. As to quaternary structure, F-type ATPases have 2 components, CF(1) - the catalytic core - and CF(0) - the membrane proton channel. CF(1) has five subunits: alpha(3), beta(3), gamma(1), delta(1), epsilon(1). CF(0) has three main subunits: a, b and c.

It localises to the cell membrane. Its function is as follows. Produces ATP from ADP in the presence of a proton gradient across the membrane. The gamma chain is believed to be important in regulating ATPase activity and the flow of protons through the CF(0) complex. The polypeptide is ATP synthase gamma chain (Heliobacterium modesticaldum (strain ATCC 51547 / Ice1)).